A 211-amino-acid chain; its full sequence is Large ribosomal subunit protein eL13 (211 aa).

Residue Lys-16 is modified to N6-acetyllysine. Phosphoserine is present on residues Ser-52, Ser-77, and Ser-106. Residues Lys-123 and Lys-145 each participate in a glycyl lysine isopeptide (Lys-Gly) (interchain with G-Cter in SUMO2) cross-link. Lys-174 is covalently cross-linked (Glycyl lysine isopeptide (Lys-Gly) (interchain with G-Cter in SUMO1); alternate). Glycyl lysine isopeptide (Lys-Gly) (interchain with G-Cter in SUMO2); alternate cross-links involve residues Lys-174 and Lys-177. Position 177 is an N6-acetyllysine; alternate (Lys-177).

It belongs to the eukaryotic ribosomal protein eL13 family. Component of the 60S large ribosomal subunit (LSU).

The protein resides in the cytoplasm. Its function is as follows. Component of the ribosome, a large ribonucleoprotein complex responsible for the synthesis of proteins in the cell. The small ribosomal subunit (SSU) binds messenger RNAs (mRNAs) and translates the encoded message by selecting cognate aminoacyl-transfer RNA (tRNA) molecules. The large subunit (LSU) contains the ribosomal catalytic site termed the peptidyl transferase center (PTC), which catalyzes the formation of peptide bonds, thereby polymerizing the amino acids delivered by tRNAs into a polypeptide chain. The nascent polypeptides leave the ribosome through a tunnel in the LSU and interact with protein factors that function in enzymatic processing, targeting, and the membrane insertion of nascent chains at the exit of the ribosomal tunnel. As part of the LSU, it is probably required for its formation and the maturation of rRNAs. Plays a role in bone development. This Rattus norvegicus (Rat) protein is Large ribosomal subunit protein eL13 (Rpl13).